The sequence spans 165 residues: Regulator of ribonuclease activity A (165 aa).

The protein belongs to the RraA family. In terms of assembly, homotrimer. Binds to both RNA-binding sites in the C-terminal region of Rne and to RhlB.

Its subcellular location is the cytoplasm. Functionally, globally modulates RNA abundance by binding to RNase E (Rne) and regulating its endonucleolytic activity. Can modulate Rne action in a substrate-dependent manner by altering the composition of the degradosome. Modulates RNA-binding and helicase activities of the degradosome. This Pseudoalteromonas translucida (strain TAC 125) protein is Regulator of ribonuclease activity A.